The primary structure comprises 188 residues: Chitin synthase 1 (188 aa).

Belongs to the chitin synthase family. Class I subfamily.

It localises to the cell membrane. The catalysed reaction is [(1-&gt;4)-N-acetyl-beta-D-glucosaminyl](n) + UDP-N-acetyl-alpha-D-glucosamine = [(1-&gt;4)-N-acetyl-beta-D-glucosaminyl](n+1) + UDP + H(+). Its function is as follows. Polymerizes chitin, a structural polymer of the cell wall and septum, by transferring the sugar moiety of UDP-GlcNAc to the non-reducing end of the growing chitin polymer. The polypeptide is Chitin synthase 1 (CHS1) (Ajellomyces dermatitidis (Blastomyces dermatitidis)).